Consider the following 36-residue polypeptide: Mu/kappa-theraphotoxin-Ap1a (36 aa).

3 disulfide bridges follow: Cys-3/Cys-18, Cys-10/Cys-23, and Cys-17/Cys-30. Phe-36 bears the Phenylalanine amide mark.

This sequence belongs to the neurotoxin 10 (Hwtx-1) family. As to expression, expressed by the venom gland.

It localises to the secreted. Inhibitor of voltage-gated potassium and sodium channels. Among other potassium channels, it selectively inhibits Kv10.1/KCNH1/EAG1 (IC(50)=236 nM) by shifting the voltage dependence of channel activation in a depolarising direction, it shows a maximum inhibition of 80% at saturating concentrations, it shows fast on-rates, and is poorly reversible. It also slightly affects channel inactivation, when the membrane is highly depolarised (&gt;+80 mV). It shows similar potency on Nav1.7/SCN9A (IC(50)=222 nM) and lower potency on Nav1.2/SCN2A (IC(50)=519 nM). This Avicularia purpurea (Ecuadorian purple pinktoe tarantula) protein is Mu/kappa-theraphotoxin-Ap1a.